Consider the following 251-residue polypeptide: Guanine nucleotide-binding protein subunit gamma 3 (251 aa).

Over residues methionine 1–glycine 10 the composition is skewed to gly residues. The tract at residues methionine 1 to leucine 44 is disordered. Residues glutamate 14–serine 28 show a composition bias toward low complexity. Pro residues predominate over residues serine 29–tyrosine 41. The region spanning glycine 46 to cysteine 126 is the G protein gamma domain. Cysteine 248 is modified (cysteine methyl ester). The S-farnesyl cysteine moiety is linked to residue cysteine 248. The propeptide at leucine 249 to phenylalanine 251 is removed in mature form.

As to quaternary structure, g proteins are composed of 3 units, alpha, beta and gamma. Expressed in flowers and siliques.

Functionally, guanine nucleotide-binding proteins (G proteins) are involved as a modulator or transducer in various transmembrane signaling systems. The beta and gamma chains are required for the GTPase activity, for replacement of GDP by GTP, and for G protein-effector interaction. This chain is Guanine nucleotide-binding protein subunit gamma 3 (GG3), found in Arabidopsis thaliana (Mouse-ear cress).